The following is a 466-amino-acid chain: Asparagine--tRNA ligase (466 aa).

The protein belongs to the class-II aminoacyl-tRNA synthetase family. As to quaternary structure, homodimer.

Its subcellular location is the cytoplasm. It catalyses the reaction tRNA(Asn) + L-asparagine + ATP = L-asparaginyl-tRNA(Asn) + AMP + diphosphate + H(+). This Serratia proteamaculans (strain 568) protein is Asparagine--tRNA ligase.